The sequence spans 127 residues: MRALALDVGLKRIGVALCIDKKIALPLDAVLRKNRNQAANEIKNLLKIHEISLLIVGIPKGGSSEEEMTRRIKHFVSLLEFDKEICFVDESGTSKEALGYGVANTRKKDGKLDSLSAFIMIKDYFAL.

The protein belongs to the YqgF nuclease family.

Its subcellular location is the cytoplasm. In terms of biological role, could be a nuclease involved in processing of the 5'-end of pre-16S rRNA. In Campylobacter jejuni subsp. jejuni serotype O:6 (strain 81116 / NCTC 11828), this protein is Putative pre-16S rRNA nuclease.